A 271-amino-acid chain; its full sequence is Malonyl-[acyl-carrier protein] O-methyltransferase (271 aa).

It belongs to the methyltransferase superfamily.

It catalyses the reaction malonyl-[ACP] + S-adenosyl-L-methionine = malonyl-[ACP] methyl ester + S-adenosyl-L-homocysteine. The protein operates within cofactor biosynthesis; biotin biosynthesis. Converts the free carboxyl group of a malonyl-thioester to its methyl ester by transfer of a methyl group from S-adenosyl-L-methionine (SAM). It allows to synthesize pimeloyl-ACP via the fatty acid synthetic pathway. The sequence is that of Malonyl-[acyl-carrier protein] O-methyltransferase from Halalkalibacterium halodurans (strain ATCC BAA-125 / DSM 18197 / FERM 7344 / JCM 9153 / C-125) (Bacillus halodurans).